Here is a 712-residue protein sequence, read N- to C-terminus: Polyribonucleotide nucleotidyltransferase (712 aa).

2 residues coordinate Mg(2+): Asp484 and Asp490. One can recognise a KH domain in the interval Pro550 to Ile609. Residues Gly619 to Lys686 form the S1 motif domain.

The protein belongs to the polyribonucleotide nucleotidyltransferase family. Mg(2+) serves as cofactor.

The protein resides in the cytoplasm. The enzyme catalyses RNA(n+1) + phosphate = RNA(n) + a ribonucleoside 5'-diphosphate. Its function is as follows. Involved in mRNA degradation. Catalyzes the phosphorolysis of single-stranded polyribonucleotides processively in the 3'- to 5'-direction. The protein is Polyribonucleotide nucleotidyltransferase of Brachyspira hyodysenteriae (strain ATCC 49526 / WA1).